The following is a 251-amino-acid chain: Imidazole glycerol phosphate synthase subunit HisF (251 aa).

Catalysis depends on residues D11 and D130.

It belongs to the HisA/HisF family. In terms of assembly, heterodimer of HisH and HisF.

It is found in the cytoplasm. It carries out the reaction 5-[(5-phospho-1-deoxy-D-ribulos-1-ylimino)methylamino]-1-(5-phospho-beta-D-ribosyl)imidazole-4-carboxamide + L-glutamine = D-erythro-1-(imidazol-4-yl)glycerol 3-phosphate + 5-amino-1-(5-phospho-beta-D-ribosyl)imidazole-4-carboxamide + L-glutamate + H(+). Its pathway is amino-acid biosynthesis; L-histidine biosynthesis; L-histidine from 5-phospho-alpha-D-ribose 1-diphosphate: step 5/9. Functionally, IGPS catalyzes the conversion of PRFAR and glutamine to IGP, AICAR and glutamate. The HisF subunit catalyzes the cyclization activity that produces IGP and AICAR from PRFAR using the ammonia provided by the HisH subunit. The sequence is that of Imidazole glycerol phosphate synthase subunit HisF from Chlorobium chlorochromatii (strain CaD3).